A 284-amino-acid polypeptide reads, in one-letter code: Anaerobic dimethyl sulfoxide reductase chain YnfH (284 aa).

The Periplasmic segment spans residues 1-9 (MGNGWHEWP). Residues 10-30 (LVIFTVLGQCVVGALIVSGIG) traverse the membrane as a helical segment. Over 31–45 (WFAAKNDADRQRIVR) the chain is Cytoplasmic. A helical transmembrane segment spans residues 46-66 (GMFFLWLLMGVGFIASVMHLG). At 67–86 (SPLRAFNSLNRIGASGLSNE) the chain is on the periplasmic side. The chain crosses the membrane as a helical span at residues 87–107 (IAAGSIFFAVGGLWWLVAVIG). Over 108 to 115 (KMPQALGK) the chain is Cytoplasmic. The chain crosses the membrane as a helical span at residues 116–136 (LWLLFSMALGVIFVWMMTCVY). The Periplasmic segment spans residues 137-148 (QIDTVPTWHNGY). A helical transmembrane segment spans residues 149–169 (TTLAFFLTVLLSGPILAAAIL). Over 170 to 180 (RAARVTFNTTP) the chain is Cytoplasmic. Residues 181 to 201 (FAIISVLALIACAGVIVLQGL) form a helical membrane-spanning segment. Topologically, residues 202-222 (SLASIHSSVQQASALVPDYAS) are periplasmic. A helical membrane pass occupies residues 223–243 (LQVWRVVLLCAGLGCWLCPLI). Topologically, residues 244–250 (RRREPHV) are cytoplasmic. A helical membrane pass occupies residues 251–271 (AGLILGLILILGGEMIGRVLF). Residues 272–284 (YGLHMTVGMAIAG) are Periplasmic-facing.

This sequence belongs to the DmsC family. As to quaternary structure, the complex consists of three subunits: YnfF, the reductase; YnfG, an electron transfer protein, and YnfH, a membrane anchor protein.

It localises to the cell inner membrane. Functionally, terminal reductase during anaerobic growth on various sulfoxide and N-oxide compounds. The C subunit anchors the other two subunits to the membrane and stabilize the catalytic subunits. In Escherichia coli (strain K12), this protein is Anaerobic dimethyl sulfoxide reductase chain YnfH (ynfH).